The primary structure comprises 367 residues: tRNA(Ile)-lysidine synthase, chloroplastic (367 aa).

64–69 serves as a coordination point for ATP; it reads SGGQDS.

Belongs to the tRNA(Ile)-lysidine synthase family.

The protein resides in the plastid. The protein localises to the chloroplast. It catalyses the reaction cytidine(34) in tRNA(Ile2) + L-lysine + ATP = lysidine(34) in tRNA(Ile2) + AMP + diphosphate + H(+). Ligates lysine onto the cytidine present at position 34 of the AUA codon-specific tRNA(Ile) that contains the anticodon CAU, in an ATP-dependent manner. Cytidine is converted to lysidine, thus changing the amino acid specificity of the tRNA from methionine to isoleucine. In Nephroselmis olivacea (Green alga), this protein is tRNA(Ile)-lysidine synthase, chloroplastic.